A 512-amino-acid polypeptide reads, in one-letter code: uncharacterized protein (512 aa).

2 helical membrane passes run 20–40 (IFPVFMVMIIGLISFYAIYIW) and 222–242 (GIALLVVMGVVLILLVIFGYI). The 216-residue stretch at 297-512 (EQLIQSIEQT…TLMCYQIPLV (216 aa)) folds into the Histidine kinase domain. Residue His-325 is modified to Phosphohistidine; by autocatalysis.

In terms of processing, autophosphorylated.

It localises to the cell membrane. It catalyses the reaction ATP + protein L-histidine = ADP + protein N-phospho-L-histidine.. Its function is as follows. Probable member of the two-component regulatory system SE_0166/SE_0165. May activate SE_0165 by phosphorylation. This is an uncharacterized protein from Staphylococcus epidermidis (strain ATCC 12228 / FDA PCI 1200).